Reading from the N-terminus, the 198-residue chain is Phosphoheptose isomerase (198 aa).

Residues 36–195 form the SIS domain; it reads AIEVYQNGNK…EEAIFRNKFV (160 aa). 51–53 serves as a coordination point for substrate; it reads NGG. Residues His60 and Glu64 each contribute to the Zn(2+) site. Residues Glu64, 93-94, 119-121, Ser124, and Gln171 contribute to the substrate site; these read ND and STS. Zn(2+) is bound by residues Gln171 and His179.

This sequence belongs to the SIS family. GmhA subfamily. It depends on Zn(2+) as a cofactor.

The protein resides in the cytoplasm. The enzyme catalyses 2 D-sedoheptulose 7-phosphate = D-glycero-alpha-D-manno-heptose 7-phosphate + D-glycero-beta-D-manno-heptose 7-phosphate. The protein operates within carbohydrate biosynthesis; D-glycero-D-manno-heptose 7-phosphate biosynthesis; D-glycero-alpha-D-manno-heptose 7-phosphate and D-glycero-beta-D-manno-heptose 7-phosphate from sedoheptulose 7-phosphate: step 1/1. It participates in cell surface structure biogenesis; S-layer biogenesis. In terms of biological role, catalyzes the isomerization of sedoheptulose 7-phosphate in D-glycero-D-manno-heptose 7-phosphate. This Aneurinibacillus thermoaerophilus protein is Phosphoheptose isomerase.